Consider the following 172-residue polypeptide: Type IV secretion system putative outer membrane lipoprotein BAB2_0057 (172 aa).

A signal peptide spans 1 to 15 (MRTLVMVACAVSLAA). The N-palmitoyl cysteine moiety is linked to residue C16. A lipid anchor (S-diacylglycerol cysteine) is attached at C16. Positions 58–172 (WPARPPKQTV…RRVDIEILRK (115 aa)) constitute an OmpA-like domain.

It is found in the cell outer membrane. Its function is as follows. The virB operon is essential for intracellular survival and is not involved in the invasion process. Constitutes a major determinant of virulence in mice. This protein is essential for pathogenesis in mice but is not required for intracellular survival. The chain is Type IV secretion system putative outer membrane lipoprotein BAB2_0057 from Brucella abortus (strain 2308).